We begin with the raw amino-acid sequence, 215 residues long: Fanconi anemia core complex-associated protein 24 (215 aa).

Positions 160 to 215 are ruvA domain 2-like; the sequence is LRTVQQIPGVGKVKAPLLLQKFPSIQQLSNASIGELEQVVGQAVAQQIHAFFTQPR.

In terms of assembly, belongs to the multisubunit FA complex composed of FANCA, FANCB, FANCC, FANCE, FANCF, FANCG, FANCL/PHF9, FANCM and FAAP24. Interacts with FANCM.

It is found in the nucleus. In terms of biological role, plays a role in DNA repair through recruitment of the FA core complex to damaged DNA. Regulates FANCD2 monoubiquitination upon DNA damage. Induces chromosomal instability as well as hypersensitivity to DNA cross-linking agents, when repressed. Targets FANCM/FAAP24 complex to the DNA, preferentially to single strand DNA. The sequence is that of Fanconi anemia core complex-associated protein 24 from Homo sapiens (Human).